The chain runs to 901 residues: Protein translocase subunit SecA (901 aa).

Residues glutamine 87, 105–109, and aspartate 512 contribute to the ATP site; that span reads GEGKT. A disordered region spans residues 868-901; it reads AALAAQTGERKVGRNDPCPCGSGKKYKQCHGRLQ. Zn(2+)-binding residues include cysteine 885, cysteine 887, cysteine 896, and histidine 897. Residues 891–901 show a composition bias toward basic residues; sequence KKYKQCHGRLQ.

This sequence belongs to the SecA family. As to quaternary structure, monomer and homodimer. Part of the essential Sec protein translocation apparatus which comprises SecA, SecYEG and auxiliary proteins SecDF-YajC and YidC. Requires Zn(2+) as cofactor.

It is found in the cell inner membrane. The protein resides in the cytoplasm. It carries out the reaction ATP + H2O + cellular proteinSide 1 = ADP + phosphate + cellular proteinSide 2.. In terms of biological role, part of the Sec protein translocase complex. Interacts with the SecYEG preprotein conducting channel. Has a central role in coupling the hydrolysis of ATP to the transfer of proteins into and across the cell membrane, serving both as a receptor for the preprotein-SecB complex and as an ATP-driven molecular motor driving the stepwise translocation of polypeptide chains across the membrane. This chain is Protein translocase subunit SecA, found in Escherichia coli O45:K1 (strain S88 / ExPEC).